The chain runs to 195 residues: Sec-independent protein translocase protein TatB (195 aa).

The helical transmembrane segment at 1–21 threads the bilayer; it reads MFDIGFSELVLIFIVGLVVLG. The segment at 166 to 195 is disordered; that stretch reads DESQFAAYYPPDDDLASPTPSQPQDKQNVS. Residues 183-195 show a composition bias toward polar residues; that stretch reads PTPSQPQDKQNVS.

It belongs to the TatB family. The Tat system comprises two distinct complexes: a TatABC complex, containing multiple copies of TatA, TatB and TatC subunits, and a separate TatA complex, containing only TatA subunits. Substrates initially bind to the TatABC complex, which probably triggers association of the separate TatA complex to form the active translocon.

The protein resides in the cell inner membrane. In terms of biological role, part of the twin-arginine translocation (Tat) system that transports large folded proteins containing a characteristic twin-arginine motif in their signal peptide across membranes. Together with TatC, TatB is part of a receptor directly interacting with Tat signal peptides. TatB may form an oligomeric binding site that transiently accommodates folded Tat precursor proteins before their translocation. The sequence is that of Sec-independent protein translocase protein TatB from Actinobacillus pleuropneumoniae serotype 5b (strain L20).